Here is a 188-residue protein sequence, read N- to C-terminus: dITP/XTP pyrophosphatase (188 aa).

10–15 is a binding site for substrate; it reads TSNPHK. Mg(2+) is bound by residues Glu-39 and Asp-69. The Proton acceptor role is filled by Asp-69. Substrate-binding positions include Ser-70, 145–148, Lys-168, and 173–174; these read FGFD and HR.

This sequence belongs to the HAM1 NTPase family. As to quaternary structure, homodimer. The cofactor is Mg(2+).

It carries out the reaction XTP + H2O = XMP + diphosphate + H(+). The enzyme catalyses dITP + H2O = dIMP + diphosphate + H(+). It catalyses the reaction ITP + H2O = IMP + diphosphate + H(+). In terms of biological role, pyrophosphatase that catalyzes the hydrolysis of nucleoside triphosphates to their monophosphate derivatives, with a high preference for the non-canonical purine nucleotides XTP (xanthosine triphosphate), dITP (deoxyinosine triphosphate) and ITP. Seems to function as a house-cleaning enzyme that removes non-canonical purine nucleotides from the nucleotide pool, thus preventing their incorporation into DNA/RNA and avoiding chromosomal lesions. The polypeptide is dITP/XTP pyrophosphatase (Ignicoccus hospitalis (strain KIN4/I / DSM 18386 / JCM 14125)).